Here is a 395-residue protein sequence, read N- to C-terminus: Chalcone synthase (395 aa).

An N-acetylvaline modification is found at valine 2. The residue at position 2 (valine 2) is an N-acetylalanine. Residue cysteine 169 is part of the active site.

It belongs to the thiolase-like superfamily. Chalcone/stilbene synthases family.

The enzyme catalyses (E)-4-coumaroyl-CoA + 3 malonyl-CoA + 3 H(+) = 2',4,4',6'-tetrahydroxychalcone + 3 CO2 + 4 CoA. The protein operates within secondary metabolite biosynthesis; flavonoid biosynthesis. In terms of biological role, the primary product of this enzyme is 4,2',4',6'-tetrahydroxychalcone (also termed naringenin-chalcone or chalcone) which can under specific conditions spontaneously isomerize into naringenin. The sequence is that of Chalcone synthase (CHS) from Arabidopsis thaliana (Mouse-ear cress).